We begin with the raw amino-acid sequence, 519 residues long: MAKERDQNTKDKNLLICFLWNFSAELKLALMALLVLCTLATLLPFLPSSFSISASELRFCISRIAVNSTSVNFTTVVEKPVLDNAVKLTEKPVLDNGVTKQPLTEEKVLNNGVIKRTFTGYGWAAYNFVLMNAYRGGVNTFAVIGLSSKPLHVYSHPTYRCEWIPLNQSDNRILTDGTKILTDWGYGRVYTTVVVNCTFPSNTVINPKNTGGTLLLHATTGDTDRNITDSIPVLTETPNTVDFALYESNLRRREKYDYLYCGSSLYGNLSPQRIREWIAYHVRFFGERSHFVLHDAGGITEEVFEVLKPWIELGRVTVHDIREQERFDGYYHNQFMVVNDCLHRYRFMAKWMFFFDVDEFIYVPAKSSISSVMVSLEEYSQFTIEQMPMSSQLCYDGDGPARTYRKWGFEKLAYRDVKKVPRRDRKYAVQPRNVFATGVHMSQHLQGKTYHRAEGKIRYFHYHGSISQRREPCRHLYNGTRIVHENNPYVLDTTMRDIGLAVKTFEIRTIGDRLLRTRQ.

A helical transmembrane segment spans residues L28–S48. The 215-residue stretch at D257 to E471 folds into the GT92 domain.

Belongs to the glycosyltransferase 92 family. As to expression, expressed in the midrib of mature leaves, root vasculature, flower filaments, siliques and seeds.

The protein localises to the golgi apparatus membrane. In terms of biological role, involved in the biosynthesis of beta-1,4-galactan. Beta-1,4-galactans are abundant polysaccharides in plant cell walls and are found as side-chain of rhamnogalacturonan I, which is a major component of pectin. The protein is Galactan beta-1,4-galactosyltransferase GALS2 of Arabidopsis thaliana (Mouse-ear cress).